The sequence spans 379 residues: Oxidized polyvinyl alcohol hydrolase (379 aa).

Residues 1–23 form the signal peptide; the sequence is MNQSLGVLRLTRGVIALALASVA. Active-site charge relay system residues include Ser203 and Ser309.

Belongs to the peptidase S9A family. In terms of assembly, monomer.

It carries out the reaction nonane-4,6-dione + H2O = pentan-2-one + butanoate + H(+). Functionally, catalyzes the hydrolysis of 4,6-nonanedione, a beta-diketone compound. Also mediates hydrolysis of oxidized polyvinyl alcohol (PVA) in the second step in the degradation of polyvinyl alcohol. Not active toward the monoketone structure. The protein is Oxidized polyvinyl alcohol hydrolase (pvaB) of Pseudomonas sp.